Here is a 159-residue protein sequence, read N- to C-terminus: 6,7-dimethyl-8-ribityllumazine synthase (159 aa).

5-amino-6-(D-ribitylamino)uracil is bound by residues phenylalanine 22, 57–59 (AVE), and 81–83 (AVI). 86–87 (GT) is a (2S)-2-hydroxy-3-oxobutyl phosphate binding site. The Proton donor role is filled by histidine 89. Phenylalanine 114 contributes to the 5-amino-6-(D-ribitylamino)uracil binding site. Position 128 (arginine 128) interacts with (2S)-2-hydroxy-3-oxobutyl phosphate.

This sequence belongs to the DMRL synthase family. Forms an icosahedral capsid composed of 60 subunits, arranged as a dodecamer of pentamers.

The enzyme catalyses (2S)-2-hydroxy-3-oxobutyl phosphate + 5-amino-6-(D-ribitylamino)uracil = 6,7-dimethyl-8-(1-D-ribityl)lumazine + phosphate + 2 H2O + H(+). It participates in cofactor biosynthesis; riboflavin biosynthesis; riboflavin from 2-hydroxy-3-oxobutyl phosphate and 5-amino-6-(D-ribitylamino)uracil: step 1/2. Its function is as follows. Catalyzes the formation of 6,7-dimethyl-8-ribityllumazine by condensation of 5-amino-6-(D-ribitylamino)uracil with 3,4-dihydroxy-2-butanone 4-phosphate. This is the penultimate step in the biosynthesis of riboflavin. The chain is 6,7-dimethyl-8-ribityllumazine synthase from Shewanella denitrificans (strain OS217 / ATCC BAA-1090 / DSM 15013).